A 242-amino-acid polypeptide reads, in one-letter code: Endothelial protein C receptor (242 aa).

Residues 1 to 17 form the signal peptide; that stretch reads MLTKFLPLLLLLLPGCA. Topologically, residues 18 to 214 are extracellular; it reads LCNSDGSQSL…GSQTGRSYTS (197 aa). 5 N-linked (GlcNAc...) asparagine glycosylation sites follow: Asn46, Asn63, Asn140, Asn166, and Asn176. 2 disulfides stabilise this stretch: Cys119–Cys190 and Cys223–Cys236. The helical transmembrane segment at 215-235 threads the bilayer; it reads LVLGILMGCFIIAGVAVGIFM. Over 236–242 the chain is Cytoplasmic; the sequence is CTSGRRC.

As to expression, expressed in endothelial cells.

It localises to the membrane. Its function is as follows. Binds activated protein C. Enhances protein C activation by the thrombin-thrombomodulin complex; plays a role in the protein C pathway controlling blood coagulation. The chain is Endothelial protein C receptor (Procr) from Mus musculus (Mouse).